The chain runs to 542 residues: Pre-mRNA-splicing factor 38B (542 aa).

Residues 1–12 show a composition bias toward polar residues; it reads MANNSPALTGNS. The interval 1–24 is disordered; sequence MANNSPALTGNSQPQHQAAAAVVQ. A2 carries the post-translational modification N-acetylalanine. The residue at position 5 (S5) is a Phosphoserine. Over residues 13-24 the composition is skewed to low complexity; it reads QPQHQAAAAVVQ. The residue at position 227 (K227) is an N6-acetyllysine. A disordered region spans residues 232–542; the sequence is QIKTRPRKIK…KEHKNKDETV (311 aa). The segment covering 243–255 has biased composition (basic and acidic residues); that stretch reads DGKEGVEEIDRHI. Basic residues predominate over residues 256 to 284; the sequence is ERRRSRSPRRSLSPRRSPRRSRSRSHHRD. Phosphoserine occurs at positions 288, 290, 318, and 320. A compositionally biased stretch (basic and acidic residues) spans 291 to 327; it reads FDRELEREKERQRLEREAKEREKERRRSRSLDRGLDR. The stretch at 292–323 forms a coiled coil; that stretch reads DRELEREKERQRLEREAKEREKERRRSRSLDR. Positions 328-344 are enriched in basic residues; that stretch reads RRSRSRERHRSRSRSRD. Basic and acidic residues predominate over residues 345-418; it reads RKGDRRDRDR…DRRHRDDKKE (74 aa). A compositionally biased stretch (basic residues) spans 419-448; it reads SKKKHSRSRSRERKHRSRSRSRNAGKRSRS. S446 is modified (phosphoserine). Residues 449–466 are compositionally biased toward basic and acidic residues; the sequence is RSKDKASKHKNESKEKSN. A phosphoserine mark is found at S471, S473, and S479. Basic and acidic residues-rich tracts occupy residues 479–492 and 499–522; these read SVEKRKREHSPSRE and RSQDRSHKRDHDSKDQSDRQDHQR. S523, S525, and S530 each carry phosphoserine. The segment covering 530-542 has biased composition (basic and acidic residues); the sequence is SQEKEHKNKDETV.

Belongs to the PRP38 family.

It localises to the nucleus. May be required for pre-mRNA splicing. The polypeptide is Pre-mRNA-splicing factor 38B (Prpf38b) (Rattus norvegicus (Rat)).